Consider the following 78-residue polypeptide: U23-theraphotoxin-Cg1a 1 (78 aa).

The N-terminal stretch at 1 to 21 (MKTSVLVTVLGLAVISVLCSA) is a signal peptide. Residues 22-49 (SQDEEQDMYDELLSAVFEVNDELQSEAR) constitute a propeptide that is removed on maturation. Intrachain disulfides connect Cys50–Cys64, Cys57–Cys69, and Cys63–Cys75.

Belongs to the neurotoxin 10 (Hwtx-1) family. 64 (Jztx-20) subfamily. As to expression, expressed by the venom gland.

The protein resides in the secreted. Probable ion channel inhibitor. The polypeptide is U23-theraphotoxin-Cg1a 1 (Chilobrachys guangxiensis (Chinese earth tiger tarantula)).